Reading from the N-terminus, the 304-residue chain is Acetylglutamate kinase (304 aa).

Substrate contacts are provided by residues 72–73 (GG), Arg-94, and Asn-199.

Belongs to the acetylglutamate kinase family. ArgB subfamily.

The protein resides in the cytoplasm. The enzyme catalyses N-acetyl-L-glutamate + ATP = N-acetyl-L-glutamyl 5-phosphate + ADP. The protein operates within amino-acid biosynthesis; L-arginine biosynthesis; N(2)-acetyl-L-ornithine from L-glutamate: step 2/4. Its function is as follows. Catalyzes the ATP-dependent phosphorylation of N-acetyl-L-glutamate. This Methylobacterium nodulans (strain LMG 21967 / CNCM I-2342 / ORS 2060) protein is Acetylglutamate kinase.